Consider the following 594-residue polypeptide: Zinc finger protein 467 (594 aa).

Positions 1-86 (MRETLEALNS…PQKAEPAGSV (86 aa)) are disordered. Residues 1–183 (MRETLEALNS…TLRLHQRLHR (183 aa)) are interaction with STAT3. A compositionally biased stretch (polar residues) spans 31–47 (SNAQEKMSSRGESTLHS). Basic and acidic residues predominate over residues 54–64 (PGQKEGIHTEQ). K97 participates in a covalent cross-link: Glycyl lysine isopeptide (Lys-Gly) (interchain with G-Cter in SUMO2). C2H2-type zinc fingers lie at residues 160 to 182 (YGCEECERRFRDQLTLRLHQRLH), 188 to 210 (CACPDCGRSFTQRAHMLLHQRSH), 216 to 238 (FPCSECDKRFSKKAHLTRHLRTH), 244 to 266 (YPCAECGKRFSQKIHLGSHQKTH), 272 to 294 (FPCTECEKRFRKKTHLIRHQRIH), 300 to 322 (YQCTQCTRSFTHKQHLVRHQRVH), 355 to 377 (FACSHCGQSFGWKKNLATHQSLH), 430 to 452 (FFCPDCGRGFAHGQHLARHRRVH), 458 to 480 (FACAQCGRRFGSRPNLVAHSRAH), 486 to 508 (FACAQCGRRFSRKSHLGRHQAVH), 514 to 536 (HACAVCARCFSSKTNLVRHQAIH), and 542 to 564 (FSCPQCAKSFSRKTHLVRHQRIH). A disordered region spans residues 313–351 (QHLVRHQRVHDAASRTRSSPDIPVAPHSPTASLTPSPPG). K368 is covalently cross-linked (Glycyl lysine isopeptide (Lys-Gly) (interchain with G-Cter in SUMO2)).

This sequence belongs to the krueppel C2H2-type zinc-finger protein family. Interacts with STAT3. Enhances STAT3 activity by keeping it in the nucleus.

The protein resides in the nucleus. Functionally, transcription factor that promotes adipocyte differentiation and suppresses osteoblast differentiation in the bone marrow. Enhances the osteoclast-supporting ability of stromal cells. Binds with STAT3 the consensus sequence 5'-CTTCTGGGAAGA-3' of the acute phase response element (APRE). Transactivates several promoters including FOS, OSM and PPARG. Recruits a histone deacetylase complex. The polypeptide is Zinc finger protein 467 (Znf467) (Mus musculus (Mouse)).